The following is a 2221-amino-acid chain: Voltage-dependent L-type calcium channel subunit alpha-1C (2221 aa).

Positions 1 to 20 (MVNENTRMYIPEENHQGSNY) are disordered. Residues 1–124 (MVNENTRMYI…RACISIVEWK (124 aa)) lie on the Cytoplasmic side of the membrane. The tract at residues 47–68 (GAALSWQAAIDAARQAKLMGSA) is calmodulin-binding. A disordered region spans residues 73-98 (ISTVSSTQRKRQQYGKPKKQGSTTAT). Positions 80-91 (QRKRQQYGKPKK) are enriched in basic residues. The stretch at 111–408 (NPIRRACISI…LVLGVLSGEF (298 aa)) is one I repeat. Residues 125-143 (PFEIIILLTIFANCVALAI) traverse the membrane as a helical segment. Topologically, residues 144 to 158 (YIPFPEDDSNATNSN) are extracellular. Asparagine 153 is a glycosylation site (N-linked (GlcNAc...) asparagine). The chain crosses the membrane as a helical span at residues 159 to 179 (LERVEYLFLIIFTVEAFLKVI). At 180–188 (AYGLLFHPN) the chain is on the cytoplasmic side. The chain crosses the membrane as a helical span at residues 189-209 (AYLRNGWNLLDFIIVVVGLFS). Topologically, residues 210–232 (AILEQATKADGANALGGKGAGFD) are extracellular. A helical transmembrane segment spans residues 233 to 251 (VKALRAFRVLRPLRLVSGV). Residues 252–268 (PSLQVVLNSIIKAMVPL) lie on the Cytoplasmic side of the membrane. Residues 269–290 (LHIALLVLFVIIIYAIIGLELF) form a helical membrane-spanning segment. Residues 291–350 (MGKMHKTCYNQEGIADVPAEDDPSPCALETGHGRQCQNGTVCKPGWDGPKHGITNFDNFA) lie on the Extracellular side of the membrane. 2 cysteine pairs are disulfide-bonded: cysteine 298–cysteine 326 and cysteine 316–cysteine 332. N-linked (GlcNAc...) asparagine glycosylation is present at asparagine 328. The pore-forming intramembrane region spans 351 to 372 (FAMLTVFQCITMEGWTDVLYWV). The short motif at 361-364 (TMEG) is the Selectivity filter of repeat I element. Ca(2+) is bound at residue glutamate 363. Residues 373-380 (NDAVGRDW) lie on the Extracellular side of the membrane. Residues 381-401 (PWIYFVTLIIIGSFFVLNLVL) traverse the membrane as a helical segment. Residues 402-524 (GVLSGEFSKE…RKCRAAVKSN (123 aa)) lie on the Cytoplasmic side of the membrane. The tract at residues 428-445 (QQLEEDLKGYLDWITQAE) is AID/alpha-interaction domain; mediates interaction with the beta subunit. The tract at residues 449-481 (PENEDEGMDEEKPRNMSMPTSETESVNTENVAG) is disordered. Positions 465–478 (SMPTSETESVNTEN) are enriched in polar residues. At serine 469 the chain carries Phosphoserine. The residue at position 476 (threonine 476) is a Phosphothreonine. The II repeat unit spans residues 510–756 (NRFCRRKCRA…VFLAIAVDNL (247 aa)). A helical transmembrane segment spans residues 525 to 543 (VFYWLVIFLVFLNTLTIAS). Residues 544–554 (EHYNQPNWLTE) lie on the Extracellular side of the membrane. The chain crosses the membrane as a helical span at residues 555 to 575 (VQDTANKALLALFTAEMLLKM). Over 576 to 586 (YSLGLQAYFVS) the chain is Cytoplasmic. A helical transmembrane segment spans residues 587–606 (LFNRFDCFVVCGGILETILV). Residues 607–615 (ETKIMSPLG) lie on the Extracellular side of the membrane. The helical transmembrane segment at 616–634 (ISVLRCVRLLRIFKITRYW) threads the bilayer. Residues 635–653 (NSLSNLVASLLNSVRSIAS) lie on the Cytoplasmic side of the membrane. Residues 654–673 (LLLLLFLFIIIFSLLGMQLF) form a helical membrane-spanning segment. Topologically, residues 674–693 (GGKFNFDEMQTRRSTFDNFP) are extracellular. Residues 694-715 (QSLLTVFQILTGEDWNSVMYDG) constitute an intramembrane region (pore-forming). Positions 704-707 (TGED) match the Selectivity filter of repeat II motif. Glutamate 706 is a binding site for Ca(2+). The Extracellular portion of the chain corresponds to 716 to 725 (IMAYGGPSFP). The helical transmembrane segment at 726–745 (GMLVCIYFIILFICGNYILL) threads the bilayer. At 746–900 (NVFLAIAVDN…LQCHRIVNDT (155 aa)) the chain is on the cytoplasmic side. Residues 764–861 (SAQKEEEEEK…EMPVGPRPRP (98 aa)) form a disordered region. Residues 783-792 (SPEKKQELVE) are compositionally biased toward basic and acidic residues. Phosphoserine is present on residues serine 808 and serine 815. Positions 829–876 (NENEDKSPYPNPETTGEEDEEEPEMPVGPRPRPLSELHLKEKAVPMPE) are interaction with STAC2. Residues 843-852 (TGEEDEEEPE) show a composition bias toward acidic residues. Residues 887 to 1189 (NRFRLQCHRI…IFVGFVIVTF (303 aa)) form an III repeat. Residues 901–919 (IFTNLILFFILLSSISLAA) form a helical membrane-spanning segment. At 920 to 931 (EDPVQHTSFRNH) the chain is on the extracellular side. The helical transmembrane segment at 932–952 (ILFYFDIVFTTIFTIEIALKI) threads the bilayer. Over 953 to 987 (LGNADYVFTSIFTLEIILKMTAYGAFLHKGSFCRN) the chain is Cytoplasmic. Residues 988 to 1006 (YFNILDLLVVSVSLISFGI) form a helical membrane-spanning segment. Residues 1007-1013 (QSSAINV) are Extracellular-facing. Residues 1014 to 1032 (VKILRVLRVLRPLRAINRA) form a helical membrane-spanning segment. At 1033–1051 (KGLKHVVQCVFVAIRTIGN) the chain is on the cytoplasmic side. Residues 1052–1071 (IVIVTTLLQFMFACIGVQLF) traverse the membrane as a helical segment. Topologically, residues 1072–1121 (KGKLYTCSDSSKQTEAECKGNYITYKDGEVDHPIIQPRSWENSKFDFDNV) are extracellular. Cysteine 1078 and cysteine 1089 are joined by a disulfide. Positions 1109–1198 (RSWENSKFDF…FQEQGEQEYK (90 aa)) are dihydropyridine binding. The pore-forming intramembrane region spans 1122–1142 (LAAMMALFTVSTFEGWPELLY). The Selectivity filter of repeat III signature appears at 1133–1136 (TFEG). Glutamate 1135 is a Ca(2+) binding site. Over 1143-1159 (RSIDSHTEDKGPIYNYR) the chain is Extracellular. Residues 1160–1181 (VEISIFFIIYIIIIAFFMMNIF) traverse the membrane as a helical segment. At 1182–1239 (VGFVIVTFQEQGEQEYKNCELDKNQRQCVEYALKARPLRRYIPKNQHQYKVWYVVNST) the chain is on the cytoplasmic side. Residues 1226-1527 (NQHQYKVWYV…LFVAVIMDNF (302 aa)) form an IV repeat. The helical transmembrane segment at 1240-1261 (YFEYLMFVLILLNTICLAMQHY) threads the bilayer. Over 1262 to 1269 (GQSCLFKI) the chain is Extracellular. A helical membrane pass occupies residues 1270 to 1291 (AMNILNMLFTGLFTVEMILKLI). Residues 1292–1301 (AFKPKGYFSD) are Cytoplasmic-facing. A helical membrane pass occupies residues 1302–1321 (PWNVFDFLIVIGSIIDVILS). At 1322 to 1372 (ETNHYFCDAWNTFDALIVVGSIVDIAITEVNPAEHTQCSPSMNAEENSRIS) the chain is on the extracellular side. Residues 1373 to 1391 (ITFFRLFRVMRLVKLLSRG) form a helical membrane-spanning segment. The Cytoplasmic portion of the chain corresponds to 1392 to 1409 (EGIRTLLWTFIKSFQALP). The chain crosses the membrane as a helical span at residues 1410 to 1430 (YVALLIVMLFFIYAVIGMQVF). Topologically, residues 1431–1452 (GKIALNDTTEINRNNNFQTFPQ) are extracellular. Asparagine 1436 carries N-linked (GlcNAc...) asparagine glycosylation. Residues 1453–1471 (AVLLLFRCATGEAWQDIML) constitute an intramembrane region (pore-forming). The Selectivity filter of repeat IV motif lies at 1462-1465 (TGEA). The Extracellular portion of the chain corresponds to 1472-1499 (ACMPGKKCAPESEPSNSTEGETPCGSSF). Residues 1478 to 1546 (KCAPESEPSN…LGPHHLDEFK (69 aa)) form a dihydropyridine binding region. Cysteine 1479 and cysteine 1495 are disulfide-bonded. Asparagine 1487 carries an N-linked (GlcNAc...) asparagine glycan. The tract at residues 1492–1534 (ETPCGSSFAVFYFISFYMLCAFLIINLFVAVIMDNFDYLTRDW) is phenylalkylamine binding. A helical transmembrane segment spans residues 1500-1524 (AVFYFISFYMLCAFLIINLFVAVIM). The Cytoplasmic segment spans residues 1525-2221 (DNFDYLTRDW…QDSRVYVSSL (697 aa)). The tract at residues 1659 to 1686 (DEVTVGKFYATFLIQEYFRKFKKRKEQG) is important for interaction with STAC1, STAC2 and STAC3. Positions 1665–1685 (KFYATFLIQEYFRKFKKRKEQ) are calmodulin-binding IQ region. An important for localization in at the junctional membrane region spans residues 1699 to 1718 (LQAGLRTLHDIGPEIRRAIS). Residues serine 1718 and serine 1739 each carry the phosphoserine modification. Positions 1778 to 1847 (INKAGSSQGD…TVEGHGPPLS (70 aa)) are disordered. A compositionally biased stretch (polar residues) spans 1799 to 1811 (STFTPSSYSSTGS). Residues 1812–1822 (NANINNANNTA) are compositionally biased toward low complexity. Serine 1981 bears the Phosphoserine; by PKA mark. Disordered regions lie at residues 2029-2063 (ASFP…VESS) and 2186-2221 (AGQD…VSSL).

This sequence belongs to the calcium channel alpha-1 subunit (TC 1.A.1.11) family. CACNA1C subfamily. In terms of assembly, component of a calcium channel complex consisting of a pore-forming alpha subunit (CACNA1C) and ancillary beta, gamma and delta subunits. The channel complex contains alpha, beta, gamma and delta subunits in a 1:1:1:1 ratio, i.e. it contains only one of each type of subunit. CACNA1C channel activity is modulated by ancillary subunits, such as CACNB1, CACNB2, CACNB3, CACNA2D1 and CACNA2D4. Interacts with the gamma subunits CACNG4, CACNG6, CACNG7 and CACNG8. Interacts with CACNB1. Interacts with CACNB2. Identified in a complex with CACNA2D4 and CACNB3. Interacts with CACNB3. Interacts with CACNA2D1. Interacts with CACNA2D4. Interacts with CALM1. Interacts (via the N-terminus and the C-terminal C and IQ motifs) with CABP1; this inhibits Ca(2+)-dependent channel inactivation. The binding via the C motif is calcium independent whereas the binding via IQ requires the presence of calcium and is mutually exclusive with calmodulin binding. The binding to the cytoplasmic N-terminal domain is calcium independent but is essential for the channel modulation. Interacts (via C-terminal CDB motif) with CABP5; in a calcium-dependent manner. Interacts with CIB1; the interaction increases upon cardiomyocytes hypertrophy. Interacts with STAC2 and STAC3; this inhibits channel inactivation. (Microbial infection) Interacts with influenzavirus H1 hemagglutinin. Phosphorylation by PKA at Ser-1981 activates the channel. Elevated levels of blood glucose lead to increased phosphorylation by PKA. In terms of tissue distribution, detected throughout the brain, including hippocampus, cerebellum and amygdala, throughout the heart and vascular system, including ductus arteriosus, in urinary bladder, and in retina and sclera in the eye. Expressed in brain, heart, jejunum, ovary, pancreatic beta-cells and vascular smooth muscle. Overall expression is reduced in atherosclerotic vascular smooth muscle.

The protein resides in the cell membrane. The protein localises to the sarcolemma. It localises to the perikaryon. Its subcellular location is the postsynaptic density membrane. It is found in the cell projection. The protein resides in the dendrite. The protein localises to the T-tubule. The enzyme catalyses Ca(2+)(in) = Ca(2+)(out). Its activity is regulated as follows. Inhibited by dihydropyridines (DHP), such as isradipine. Inhibited by nifedipine. Channel activity is regulated by Ca(2+) and calmodulin. Binding of STAC1, STAC2 or STAC3 to a region that overlaps with the calmodulin binding site inhibits channel inactivation by Ca(2+) and calmodulin. Binding of calmodulin or CABP1 at the same regulatory sites results in opposite effects on the channel function. Shear stress and pressure increases calcium channel activity. Functionally, pore-forming, alpha-1C subunit of the voltage-gated calcium channel that gives rise to L-type calcium currents. Mediates influx of calcium ions into the cytoplasm, and thereby triggers calcium release from the sarcoplasm. Plays an important role in excitation-contraction coupling in the heart. Required for normal heart development and normal regulation of heart rhythm. Required for normal contraction of smooth muscle cells in blood vessels and in the intestine. Essential for normal blood pressure regulation via its role in the contraction of arterial smooth muscle cells. Long-lasting (L-type) calcium channels belong to the 'high-voltage activated' (HVA) group. Its function is as follows. Pore-forming, alpha-1C subunit of the voltage-gated calcium channel that gives rise to L-type calcium currents. (Microbial infection) Acts as a receptor for Influenzavirus. May play a critical role in allowing virus entry when sialylated and expressed on lung tissues. This Homo sapiens (Human) protein is Voltage-dependent L-type calcium channel subunit alpha-1C (CACNA1C).